Consider the following 460-residue polypeptide: Bifunctional protein GlmU (460 aa).

Residues 1-232 (MAISAALILA…PDEIMGVNDR (232 aa)) are pyrophosphorylase. Residues 9-12 (LAAG), Lys23, Gln75, and 80-81 (GT) contribute to the UDP-N-acetyl-alpha-D-glucosamine site. Residue Asp105 participates in Mg(2+) binding. Residues Gly142, Glu157, Asn172, and Asn230 each contribute to the UDP-N-acetyl-alpha-D-glucosamine site. Mg(2+) is bound at residue Asn230. The linker stretch occupies residues 233 to 253 (VQLAHAARVLRQRVNLQLMLA). The tract at residues 254–460 (GVTLIDPDQT…GWCLKKRDNG (207 aa)) is N-acetyltransferase. Residues Arg336 and Lys354 each contribute to the UDP-N-acetyl-alpha-D-glucosamine site. Catalysis depends on His366, which acts as the Proton acceptor. UDP-N-acetyl-alpha-D-glucosamine is bound by residues Tyr369 and Asn380. Acetyl-CoA is bound by residues 389 to 390 (NY), Ser408, Ala426, and Arg443.

The protein in the N-terminal section; belongs to the N-acetylglucosamine-1-phosphate uridyltransferase family. In the C-terminal section; belongs to the transferase hexapeptide repeat family. Homotrimer. Mg(2+) is required as a cofactor.

The protein resides in the cytoplasm. The enzyme catalyses alpha-D-glucosamine 1-phosphate + acetyl-CoA = N-acetyl-alpha-D-glucosamine 1-phosphate + CoA + H(+). The catalysed reaction is N-acetyl-alpha-D-glucosamine 1-phosphate + UTP + H(+) = UDP-N-acetyl-alpha-D-glucosamine + diphosphate. It functions in the pathway nucleotide-sugar biosynthesis; UDP-N-acetyl-alpha-D-glucosamine biosynthesis; N-acetyl-alpha-D-glucosamine 1-phosphate from alpha-D-glucosamine 6-phosphate (route II): step 2/2. The protein operates within nucleotide-sugar biosynthesis; UDP-N-acetyl-alpha-D-glucosamine biosynthesis; UDP-N-acetyl-alpha-D-glucosamine from N-acetyl-alpha-D-glucosamine 1-phosphate: step 1/1. It participates in bacterial outer membrane biogenesis; LPS lipid A biosynthesis. Catalyzes the last two sequential reactions in the de novo biosynthetic pathway for UDP-N-acetylglucosamine (UDP-GlcNAc). The C-terminal domain catalyzes the transfer of acetyl group from acetyl coenzyme A to glucosamine-1-phosphate (GlcN-1-P) to produce N-acetylglucosamine-1-phosphate (GlcNAc-1-P), which is converted into UDP-GlcNAc by the transfer of uridine 5-monophosphate (from uridine 5-triphosphate), a reaction catalyzed by the N-terminal domain. The polypeptide is Bifunctional protein GlmU (Trichlorobacter lovleyi (strain ATCC BAA-1151 / DSM 17278 / SZ) (Geobacter lovleyi)).